We begin with the raw amino-acid sequence, 249 residues long: (S)-1-Phenylethanol dehydrogenase (249 aa).

Residues 17 to 19 (NGI), D38, 61 to 63 (CDV), N89, and Y93 each bind NAD(+). S141 is a substrate binding site. The active-site Proton acceptor is Y154. NAD(+) is bound by residues K158, 184-187 (PSLV), and T191.

This sequence belongs to the short-chain dehydrogenases/reductases (SDR) family. Homotetramer.

It catalyses the reaction (S)-1-phenylethanol + NAD(+) = acetophenone + NADH + H(+). Functionally, catalyzes the NAD-dependent stereospecific oxidation of (S)-1-phenylethanol to acetophenone in the degradation of ethylbenzene. This chain is (S)-1-Phenylethanol dehydrogenase (ped), found in Aromatoleum aromaticum (strain DSM 19018 / LMG 30748 / EbN1) (Azoarcus sp. (strain EbN1)).